We begin with the raw amino-acid sequence, 258 residues long: Trans-aconitate 2-methyltransferase (258 aa).

The protein belongs to the methyltransferase superfamily. Tam family.

It is found in the cytoplasm. The catalysed reaction is trans-aconitate + S-adenosyl-L-methionine = (E)-3-(methoxycarbonyl)pent-2-enedioate + S-adenosyl-L-homocysteine. In terms of biological role, catalyzes the S-adenosylmethionine monomethyl esterification of trans-aconitate. This Acidovorax sp. (strain JS42) protein is Trans-aconitate 2-methyltransferase.